Reading from the N-terminus, the 467-residue chain is F-box protein pof9 (467 aa).

The 47-residue stretch at 3–49 folds into the F-box domain; it reads KSPFLELSYDILLEISTYLDYKDIVHLSETCKSLSYVFDDKTIWHRF. RCC1 repeat units follow at residues 77-131, 302-354, and 355-417; these read RGYA…LLNE, ETFT…YLTS, and DHSI…AAGG.

In terms of assembly, interacts with skp1.

The protein resides in the cytoplasm. Its subcellular location is the nucleus. The sequence is that of F-box protein pof9 (pof9) from Schizosaccharomyces pombe (strain 972 / ATCC 24843) (Fission yeast).